Here is a 228-residue protein sequence, read N- to C-terminus: 7-cyano-7-deazaguanine synthase (228 aa).

8–18 (LSGGLDSTTCL) contributes to the ATP binding site. Positions 188, 198, 201, and 204 each coordinate Zn(2+).

Belongs to the QueC family. Zn(2+) serves as cofactor.

The catalysed reaction is 7-carboxy-7-deazaguanine + NH4(+) + ATP = 7-cyano-7-deazaguanine + ADP + phosphate + H2O + H(+). It participates in purine metabolism; 7-cyano-7-deazaguanine biosynthesis. Its function is as follows. Catalyzes the ATP-dependent conversion of 7-carboxy-7-deazaguanine (CDG) to 7-cyano-7-deazaguanine (preQ(0)). The protein is 7-cyano-7-deazaguanine synthase of Legionella pneumophila (strain Corby).